The sequence spans 256 residues: uncharacterized protein (256 aa).

8 residues coordinate NADP(+): isoleucine 18, serine 37, lysine 46, aspartate 66, tyrosine 164, lysine 168, valine 197, and threonine 199. The active-site Proton donor is the tyrosine 164. The active-site Lowers pKa of active site Tyr is lysine 168.

This sequence belongs to the short-chain dehydrogenases/reductases (SDR) family.

It is found in the cytoplasm. This is an uncharacterized protein from Saccharomyces cerevisiae (strain ATCC 204508 / S288c) (Baker's yeast).